The sequence spans 724 residues: 1,4-alpha-glucan branching enzyme GlgB 1 (724 aa).

The active-site Nucleophile is the aspartate 403. Residue glutamate 456 is the Proton donor of the active site.

This sequence belongs to the glycosyl hydrolase 13 family. GlgB subfamily. Monomer.

It catalyses the reaction Transfers a segment of a (1-&gt;4)-alpha-D-glucan chain to a primary hydroxy group in a similar glucan chain.. It functions in the pathway glycan biosynthesis; glycogen biosynthesis. Catalyzes the formation of the alpha-1,6-glucosidic linkages in glycogen by scission of a 1,4-alpha-linked oligosaccharide from growing alpha-1,4-glucan chains and the subsequent attachment of the oligosaccharide to the alpha-1,6 position. The chain is 1,4-alpha-glucan branching enzyme GlgB 1 (glgB1) from Xanthomonas axonopodis pv. citri (strain 306).